A 213-amino-acid polypeptide reads, in one-letter code: Peptide methionine sulfoxide reductase MsrA (213 aa).

Cys-53 is an active-site residue.

Belongs to the MsrA Met sulfoxide reductase family.

It catalyses the reaction L-methionyl-[protein] + [thioredoxin]-disulfide + H2O = L-methionyl-(S)-S-oxide-[protein] + [thioredoxin]-dithiol. It carries out the reaction [thioredoxin]-disulfide + L-methionine + H2O = L-methionine (S)-S-oxide + [thioredoxin]-dithiol. In terms of biological role, has an important function as a repair enzyme for proteins that have been inactivated by oxidation. Catalyzes the reversible oxidation-reduction of methionine sulfoxide in proteins to methionine. This chain is Peptide methionine sulfoxide reductase MsrA, found in Serratia proteamaculans (strain 568).